The following is a 424-amino-acid chain: Histidinol dehydrogenase (424 aa).

The NAD(+) site is built by Tyr-127, Gln-188, and Asn-211. Substrate contacts are provided by Ser-234, Gln-256, and His-259. Residues Gln-256 and His-259 each coordinate Zn(2+). Catalysis depends on proton acceptor residues Glu-322 and His-323. Residues His-323, Asp-356, Glu-410, and His-415 each contribute to the substrate site. Position 356 (Asp-356) interacts with Zn(2+). A Zn(2+)-binding site is contributed by His-415.

It belongs to the histidinol dehydrogenase family. Zn(2+) is required as a cofactor.

The catalysed reaction is L-histidinol + 2 NAD(+) + H2O = L-histidine + 2 NADH + 3 H(+). It functions in the pathway amino-acid biosynthesis; L-histidine biosynthesis; L-histidine from 5-phospho-alpha-D-ribose 1-diphosphate: step 9/9. Catalyzes the sequential NAD-dependent oxidations of L-histidinol to L-histidinaldehyde and then to L-histidine. The protein is Histidinol dehydrogenase of Methanococcus maripaludis (strain DSM 14266 / JCM 13030 / NBRC 101832 / S2 / LL).